Reading from the N-terminus, the 220-residue chain is Putative NAD(P)H nitroreductase SERP2086 (220 aa).

It belongs to the nitroreductase family. It depends on FMN as a cofactor.

The polypeptide is Putative NAD(P)H nitroreductase SERP2086 (Staphylococcus epidermidis (strain ATCC 35984 / DSM 28319 / BCRC 17069 / CCUG 31568 / BM 3577 / RP62A)).